We begin with the raw amino-acid sequence, 876 residues long: Liprin-beta-2 (876 aa).

Residues 101–313 (AASNETYQER…TGLLNQYRKV (213 aa)) are a coiled coil. 3 positions are modified to phosphoserine: serine 329, serine 363, and serine 387. A disordered region spans residues 356–376 (EMPPRCSSPTVGPPPLPQKSL). Disordered stretches follow at residues 425–451 (LPGKLSGATPNGEAAKSPPTICQPDAT) and 470–500 (VVNDLSSTSSGTESGPQSPLTPDGKRNPKGI). Residues 473 to 489 (DLSSTSSGTESGPQSPL) are compositionally biased toward polar residues. Phosphoserine is present on serine 512. Residues 527–553 (RGGLRATAGPRLSRTRDSKGQKSDANA) are disordered. SAM domains are found at residues 558-622 (WSTE…INTK), 630-693 (LDHI…LHVN), and 718-783 (WSNH…KFNA).

Belongs to the liprin family. Liprin-beta subfamily. As to quaternary structure, forms homodimers and heterodimers. In terms of tissue distribution, widely expressed.

In terms of biological role, may regulate the disassembly of focal adhesions. Did not bind receptor-like tyrosine phosphatases type 2A. The sequence is that of Liprin-beta-2 (PPFIBP2) from Homo sapiens (Human).